The primary structure comprises 501 residues: Endonuclease domain-containing 1 protein (501 aa).

The first 21 residues, 1 to 21 (MGCARWLALGGLLALAGLLQA), serve as a signal peptide directing secretion. Residue Lys408 is modified to N6-acetyllysine.

The protein belongs to the DNA/RNA non-specific endonuclease family. Interacts with RNF26; this interaction is important to modulate innate immune signaling through the cGAS-STING pathway.

It localises to the secreted. Functionally, may act as a DNase and a RNase. Plays a role in the modulation of innate immune signaling through the cGAS-STING pathway by interacting with RNF26. This Mus musculus (Mouse) protein is Endonuclease domain-containing 1 protein (Endod1).